A 190-amino-acid polypeptide reads, in one-letter code: Outer-membrane lipoprotein LolB (190 aa).

A signal peptide spans 1-16 (MRLRFSLLLTVSLLAG). The N-palmitoyl cysteine moiety is linked to residue Cys-17. Residue Cys-17 is the site of S-diacylglycerol cysteine attachment.

The protein belongs to the LolB family. Monomer.

It is found in the cell outer membrane. In terms of biological role, plays a critical role in the incorporation of lipoproteins in the outer membrane after they are released by the LolA protein. In Dechloromonas aromatica (strain RCB), this protein is Outer-membrane lipoprotein LolB.